A 273-amino-acid polypeptide reads, in one-letter code: DnaJ homolog subfamily C member 27 (273 aa).

Residues 23–30 (GNAEVGKS), 71–75 (DMAGH), and 134–137 (NKVD) contribute to the GTP site. In terms of domain architecture, J spans 217-273 (DSWDMLGVKPGATREEVNKAYRKLAVLLHPDKCVAPGSEDAFKAVVNARTSLLKNIK).

It belongs to the small GTPase superfamily. Rab family.

Its subcellular location is the nucleus. Functionally, GTPase possibly involved in regulation of the MEK/ERK pathway. The polypeptide is DnaJ homolog subfamily C member 27 (dnajc27) (Danio rerio (Zebrafish)).